Reading from the N-terminus, the 386-residue chain is Protein MGF 360-4L (386 aa).

This sequence belongs to the asfivirus MGF 360 family.

Its function is as follows. Plays a role in virus cell tropism, and may be required for efficient virus replication in macrophages. The chain is Protein MGF 360-4L from African swine fever virus (isolate Warthog/Namibia/Wart80/1980) (ASFV).